Consider the following 397-residue polypeptide: Elongation factor Tu (397 aa).

Residues 10-206 (KPHVNIGTIG…AVDDSIPEPQ (197 aa)) form the tr-type G domain. The G1 stretch occupies residues 19 to 26 (GHIDHGKT). 19–26 (GHIDHGKT) contacts GTP. A Mg(2+)-binding site is contributed by T26. The segment at 62–66 (GITIS) is G2. Residues 83–86 (DCPG) are G3. Residues 83-87 (DCPGH) and 138-141 (NKAD) contribute to the GTP site. Positions 138-141 (NKAD) are G4. A G5 region spans residues 176–178 (SAL).

Belongs to the TRAFAC class translation factor GTPase superfamily. Classic translation factor GTPase family. EF-Tu/EF-1A subfamily. As to quaternary structure, monomer.

It is found in the cytoplasm. It carries out the reaction GTP + H2O = GDP + phosphate + H(+). Its function is as follows. GTP hydrolase that promotes the GTP-dependent binding of aminoacyl-tRNA to the A-site of ribosomes during protein biosynthesis. The chain is Elongation factor Tu from Frankia alni (strain DSM 45986 / CECT 9034 / ACN14a).